The following is a 551-amino-acid chain: MPSETPQAEVGPTGCPHRSGPHSAKGSLEKGSPEDKEAKEPLWIRPDAPSRCTWQLGRPASESPHHHTAPAKSPKILPDILKKIGDTPMVRINKIGKKFGLKCELLAKCEFFNAGGSVKDRISLRMIEDAERDGTLKPGDTIIEPTSGNTGIGLALAAAVRGYRCIIVMPEKMSSEKVDVLRALGAEIVRTPTNARFDSPESHVGVAWRLKNEIPNSHILDQYRNASNPLAHYDTTADEILQQCDGKLDMLVASVGTGGTITGIARKLKEKCPGCRIIGVDPEGSILAEPEELNQTEQTTYEVEGIGYDFIPTVLDRTVVDKWFKSNDEEAFTFARMLIAQEGLLCGGSAGSTVAVAVKAAQELQEGQRCVVILPDSVRNYMTKFLSDRWMLQKGFLKEEDLTEKKPWWWHLRVQELGLSAPLTVLPTITCGHTIEILREKGFDQAPVVDEAGVILGMVTLGNMLSSLLAGKVQPSDQVGKVIYKQFKQIRLTDTLGRLSHILEMDHFALVVHEQIQYHSTGKSSQRQMVFGVVTAIDLLNFVAAQERDQK.

A disordered region spans residues 1 to 74 (MPSETPQAEV…HHHTAPAKSP (74 aa)). At serine 27 the chain carries Phosphoserine. Residues 27–42 (SLEKGSPEDKEAKEPL) show a composition bias toward basic and acidic residues. Cysteine 52 and histidine 65 together coordinate heme. An N6-(pyridoxal phosphate)lysine modification is found at lysine 119. Asparagine 149 lines the pyridoxal 5'-phosphate pocket. Residue serine 199 is modified to Phosphoserine. Lysine 211 participates in a covalent cross-link: Glycyl lysine isopeptide (Lys-Gly) (interchain with G-Cter in SUMO). Pyridoxal 5'-phosphate is bound by residues 256–260 (GTGGT) and serine 349. In terms of domain architecture, CBS spans 418 to 476 (GLSAPLTVLPTITCGHTIEILREKGFDQAPVVDEAGVILGMVTLGNMLSSLLAGKVQPS).

Belongs to the cysteine synthase/cystathionine beta-synthase family. As to quaternary structure, homotetramer. The cofactor is pyridoxal 5'-phosphate. In terms of tissue distribution, in the adult strongly expressed in liver and pancreas, some expression in heart and brain, weak expression in lung and kidney. In the fetus, expressed in brain, liver and kidney.

It is found in the cytoplasm. The protein resides in the nucleus. The enzyme catalyses L-homocysteine + L-serine = L,L-cystathionine + H2O. It functions in the pathway amino-acid biosynthesis; L-cysteine biosynthesis; L-cysteine from L-homocysteine and L-serine: step 1/2. Its activity is regulated as follows. Allosterically activated by S-adenosyl-methionine/AdoMet. Activated by S-adenosylhomocysteine/AdoHcy. Binds non-covalently to a heme group that may control the redox sensitivity of the enzyme. Hydro-lyase catalyzing the first step of the transsulfuration pathway, where the hydroxyl group of L-serine is displaced by L-homocysteine in a beta-replacement reaction to form L-cystathionine, the precursor of L-cysteine. This catabolic route allows the elimination of L-methionine and the toxic metabolite L-homocysteine. Also involved in the production of hydrogen sulfide, a gasotransmitter with signaling and cytoprotective effects on neurons. This Homo sapiens (Human) protein is Cystathionine beta-synthase (CBS).